Here is a 93-residue protein sequence, read N- to C-terminus: Small ribosomal subunit protein uS17 (93 aa).

It belongs to the universal ribosomal protein uS17 family. In terms of assembly, part of the 30S ribosomal subunit.

Its function is as follows. One of the primary rRNA binding proteins, it binds specifically to the 5'-end of 16S ribosomal RNA. The polypeptide is Small ribosomal subunit protein uS17 (Rhodococcus jostii (strain RHA1)).